The primary structure comprises 702 residues: Elongation factor G (702 aa).

Residues 8 to 290 form the tr-type G domain; that stretch reads TRYRNIGISA…AVIEYLPAPT (283 aa). Residues 17 to 24, 88 to 92, and 142 to 145 contribute to the GTP site; these read AHIDAGKT, DTPGH, and NKMD.

The protein belongs to the TRAFAC class translation factor GTPase superfamily. Classic translation factor GTPase family. EF-G/EF-2 subfamily.

The protein localises to the cytoplasm. Functionally, catalyzes the GTP-dependent ribosomal translocation step during translation elongation. During this step, the ribosome changes from the pre-translocational (PRE) to the post-translocational (POST) state as the newly formed A-site-bound peptidyl-tRNA and P-site-bound deacylated tRNA move to the P and E sites, respectively. Catalyzes the coordinated movement of the two tRNA molecules, the mRNA and conformational changes in the ribosome. The protein is Elongation factor G of Erwinia tasmaniensis (strain DSM 17950 / CFBP 7177 / CIP 109463 / NCPPB 4357 / Et1/99).